Here is a 374-residue protein sequence, read N- to C-terminus: MSGRSCKGPFKILVLPGDGIGPEIIKEAVKVLKALGEKKGITFNFQYGLIGGAAIDERGVPLPEETVELGKQCDAILLGAVGGPKWDNLPPEIRPELGGLLKIRKVFDLYANLRPVMFFPELKNASPLKPDIIEGVDILMVRELTGGLYFGEKKRFTTEQGEQAVIDTLIYTEKEVERVVRLGFELAQKRRGKLTLVDKANVLESSRFWREITGEIKKEYPDVELSYMYVDNCAMQLIRNPRQFDVIVTENMFGDILTDEGSVLAGSIGLLPSASLNGKFGLYEPIHGSAPDIAGQNKANPLATILSAGMMLRYSLDCPEEALLIEKAVKAVLQKGYRTGDILEPGTTLVTCEEMGDLVAEEILGGVYDEGLPL.

Residue 83-96 (GPKWDNLPPEIRPE) coordinates NAD(+). Substrate-binding residues include arginine 104, arginine 114, arginine 142, and aspartate 231. Mg(2+) contacts are provided by aspartate 231, aspartate 255, and aspartate 259. 288–300 (GSAPDIAGQNKAN) is a binding site for NAD(+).

It belongs to the isocitrate and isopropylmalate dehydrogenases family. LeuB type 1 subfamily. As to quaternary structure, homodimer. Mg(2+) serves as cofactor. The cofactor is Mn(2+).

Its subcellular location is the cytoplasm. The catalysed reaction is (2R,3S)-3-isopropylmalate + NAD(+) = 4-methyl-2-oxopentanoate + CO2 + NADH. The protein operates within amino-acid biosynthesis; L-leucine biosynthesis; L-leucine from 3-methyl-2-oxobutanoate: step 3/4. Functionally, catalyzes the oxidation of 3-carboxy-2-hydroxy-4-methylpentanoate (3-isopropylmalate) to 3-carboxy-4-methyl-2-oxopentanoate. The product decarboxylates to 4-methyl-2 oxopentanoate. This is 3-isopropylmalate dehydrogenase from Carboxydothermus hydrogenoformans (strain ATCC BAA-161 / DSM 6008 / Z-2901).